Reading from the N-terminus, the 250-residue chain is Ubiquinone/menaquinone biosynthesis C-methyltransferase UbiE (250 aa).

Residues serine 73, aspartate 94, and 122-123 (NA) each bind S-adenosyl-L-methionine.

It belongs to the class I-like SAM-binding methyltransferase superfamily. MenG/UbiE family.

The catalysed reaction is a 2-demethylmenaquinol + S-adenosyl-L-methionine = a menaquinol + S-adenosyl-L-homocysteine + H(+). The enzyme catalyses a 2-methoxy-6-(all-trans-polyprenyl)benzene-1,4-diol + S-adenosyl-L-methionine = a 5-methoxy-2-methyl-3-(all-trans-polyprenyl)benzene-1,4-diol + S-adenosyl-L-homocysteine + H(+). Its pathway is quinol/quinone metabolism; menaquinone biosynthesis; menaquinol from 1,4-dihydroxy-2-naphthoate: step 2/2. It functions in the pathway cofactor biosynthesis; ubiquinone biosynthesis. Its function is as follows. Methyltransferase required for the conversion of demethylmenaquinol (DMKH2) to menaquinol (MKH2) and the conversion of 2-polyprenyl-6-methoxy-1,4-benzoquinol (DDMQH2) to 2-polyprenyl-3-methyl-6-methoxy-1,4-benzoquinol (DMQH2). The protein is Ubiquinone/menaquinone biosynthesis C-methyltransferase UbiE of Legionella pneumophila subsp. pneumophila (strain Philadelphia 1 / ATCC 33152 / DSM 7513).